Here is a 1134-residue protein sequence, read N- to C-terminus: MWLKPEEVLLKNALKLWVTQKSSCYFVLQRRRGHGEGGGRLTGRLVGALDAVLDSSARVAPFRILLQVPGSQVYSPIACGATLEEINRHWDWLEQNLLHTLSVFDNKDDIASFVKGKVKALIAEETSSRLAEQEEEPEKFREALVKFEARFNFPEAEKLVTYYSCCCWKGRVPRQGWLYLSINHLCFYSFFLGKELKLVIPWVDIQKLERTSNVFLTDTIRITTQNKERDFSTFLNLDEVFKIMEQLADVTLRRLLDNEVFDLDPDLQEPSQITKRDLEARAQNEFFRAFFRLPREEKLHAVADCSLWTPFSRCHTAGRIFSSDSYICFASREDGCCNVVLPLREVVSIEKMEDTSLLPNPIIVSIRSKMAFQFIELKDRENLVEGLLLRLKQVHANHPVHYETSPSDDDMASPVFYSASICTDKFGDLEMVASQSSEEREEKRPLPHPEPLTAVFQQSGSQSPDSRLSREQIKISLWNDHFVEYGRTVCMFRTEKIRKLVAMGIPESLRGRLWLLFSDAVTDLASHPGYYGNLVEQSLGRCCLVTEEIERDLHRSLPEHPAFQNETGIAALRRVLTAYAHRNPKIGYCQSMNILTSVLLLYAKEEEAFWLLVAVCERMLPDYFNHRVIGAQVDQSVFEELIKEQLPELAEHMSDLSALASISLSWFLTLFLSIMPLESAVHVVDCFFYDGIKAIFQLGLAVLEANAEELCSSKDDGQALMVLSRFLDHIKNEDSPGPPIGSHHAFFSDDQEPYPVTDIADLIRDSYEKFGNQSVEQIEHLRCKHRIRVLQGHEDTTKQNVLRVVIPEVSILPEDLEELYDLFKRAHMMSCYWEHHRPMALRHDPSRPYAEQYRIDARQFAHLFQLVSPWTCGVHTEILAERLFRLLDDNMDQLIEFKAFTSCLDIMYNGEMNEKIKLLYRLHIPPALTENDRDSQSPLKNPLLSTSRPLVLGKPNGDTIDYQKQLKQMIKDLAKEKDKMEKELPKMSQREFIQFCKTLYSMFHEDPEENDLYQAIATVTTLLLQIGEVGQRGSSSGSCSQECEEPQASAPPEQDSVFAEAGKSPQAFPETEGDWTVSLEHILASLLTEQSLVNFFEKPLNIKSKLENAKLNQYSLKVLEMSHPPQAELKLNDL.

GRAM domains are found at residues 145–212 (VKFE…ERTS) and 285–353 (EFFR…EKME). The tract at residues 433 to 466 (ASQSSEEREEKRPLPHPEPLTAVFQQSGSQSPDS) is disordered. Over residues 437–447 (SEEREEKRPLP) the composition is skewed to basic and acidic residues. The segment covering 455 to 466 (VFQQSGSQSPDS) has biased composition (polar residues). The Rab-GAP TBC domain occupies 504-691 (GIPESLRGRL…HVVDCFFYDG (188 aa)). The segment at 1034-1070 (SSSGSCSQECEEPQASAPPEQDSVFAEAGKSPQAFPE) is disordered.

May act as a GTPase-activating protein for Rab family protein(s). This is TBC1 domain family member 8 (Tbc1d8) from Mus musculus (Mouse).